Reading from the N-terminus, the 209-residue chain is MIGLIGRKVGMTRVFTEDGVSIPVTVVEVEANRVSQVKTLETDGYAAIQVTAGSKKANRVNKAEAGHFAKAGVEAGRGLWEFRLENGEEFAVGAELTVELFNETKKVDVTGTSKGKGFQGAVKRWNFRTQDMTHGNSLSHRAPGSIGQCQTPGRVFKGKKMAGHMGAERVTTQNLEIVRVDAERNLLLIKGAVPGSTGGNVIVKPAVKA.

Residue Gln150 is modified to N5-methylglutamine.

It belongs to the universal ribosomal protein uL3 family. As to quaternary structure, part of the 50S ribosomal subunit. Forms a cluster with proteins L14 and L19. Post-translationally, methylated by PrmB.

Functionally, one of the primary rRNA binding proteins, it binds directly near the 3'-end of the 23S rRNA, where it nucleates assembly of the 50S subunit. This is Large ribosomal subunit protein uL3 from Vibrio campbellii (strain ATCC BAA-1116).